We begin with the raw amino-acid sequence, 343 residues long: GDSL esterase/lipase EXL4 (343 aa).

An N-terminal signal peptide occupies residues Met1–Ala21. Asn23 carries an N-linked (GlcNAc...) asparagine glycan. Ser35 functions as the Nucleophile in the catalytic mechanism. Catalysis depends on residues Asp318 and His321.

The protein belongs to the 'GDSL' lipolytic enzyme family. As to expression, flower buds and pollen.

It is found in the secreted. Its subcellular location is the extracellular space. The protein resides in the extracellular matrix. The protein localises to the pollen coat. Its function is as follows. Required for the formation of pollen coats and male fertility. The polypeptide is GDSL esterase/lipase EXL4 (EXL4) (Arabidopsis thaliana (Mouse-ear cress)).